We begin with the raw amino-acid sequence, 346 residues long: uncharacterized protein (346 aa).

Residues 7–27 (AMVILLIICGTYVLFIQYGSV) form a helical membrane-spanning segment. Residues 29–48 (EKKSNDSEPQVSNEEAQSGK) are disordered. The segment covering 35–44 (SEPQVSNEEA) has biased composition (polar residues). The SCP domain occupies 231–342 (LDLTNVIRVK…VDRKYYTQNF (112 aa)).

It is found in the cell membrane. This is an uncharacterized protein from Bacillus subtilis (strain 168).